A 335-amino-acid chain; its full sequence is GIPYWTYNNGDEPLVAISLLDTSNIANQLDSTPRVFYLGGNPEVEFPETQEEQQERHQQKHSLPVGRRGGQHQQEEESEEQKDGNSVLSGFSSEFLAQTFNTEEDTAKRLRSPRDKRNQIVRVEGGLRIINPEGQQEEEEQEEEEKQRSEQGRNGLEETICSLKIRENIAQPARADLYNPRAGSISTANSLTLPILRYLRLSAEYVRLYRNGIYAPHWNINANSLLYVIRGEGRVRIVNSQGNAVFDNKVRKGQLVVVPQNFVVAEQAGEEEGLEYLVFKTNDRAAVSHVQQVFRATPADVLANAFGLRQRQVTELKLSGNRGPLVHPHSQSQSN.

Disordered regions lie at residues 47–87 (PETQ…GNSV) and 102–155 (TEED…GRNG). The span at 105–118 (DTAKRLRSPRDKRN) shows a compositional bias: basic and acidic residues. Over residues 135–144 (QQEEEEQEEE) the composition is skewed to acidic residues. Residues 167 to 314 (ENIAQPARAD…AFGLRQRQVT (148 aa)) form the Cupin type-1 domain.

It belongs to the 11S seed storage protein (globulins) family. Hexamer; each subunit is composed of an acidic and a basic chain derived from a single precursor and linked by a disulfide bond.

This protein found in the seeds of many leguminous and non-leguminous plants is the source of sulfur-containing amino acids in seed meals. This Vicia faba (Broad bean) protein is Legumin type B (LEB7).